The chain runs to 224 residues: Glycerol-3-phosphate acyltransferase (224 aa).

Transmembrane regions (helical) follow at residues 14 to 34 (FFPL…FAVI), 64 to 84 (TAAI…VMLV), 98 to 118 (MALV…FNFA), 127 to 147 (LGVL…TWLI), and 160 to 180 (LTAA…AWYL).

This sequence belongs to the PlsY family. As to quaternary structure, probably interacts with PlsX.

Its subcellular location is the cell inner membrane. It catalyses the reaction an acyl phosphate + sn-glycerol 3-phosphate = a 1-acyl-sn-glycero-3-phosphate + phosphate. The protein operates within lipid metabolism; phospholipid metabolism. In terms of biological role, catalyzes the transfer of an acyl group from acyl-phosphate (acyl-PO(4)) to glycerol-3-phosphate (G3P) to form lysophosphatidic acid (LPA). This enzyme utilizes acyl-phosphate as fatty acyl donor, but not acyl-CoA or acyl-ACP. The chain is Glycerol-3-phosphate acyltransferase from Albidiferax ferrireducens (strain ATCC BAA-621 / DSM 15236 / T118) (Rhodoferax ferrireducens).